The chain runs to 709 residues: Dibasic-processing endoprotease (709 aa).

Residues Met1–Cys22 form the signal peptide. 2 consecutive propeptides follow at residues Ser23 to Arg82 and Gly83 to Arg102. Over Asp103–Glu668 the chain is Lumenal. One can recognise a Peptidase S8 domain in the interval Gln128–Val440. Asn155 carries N-linked (GlcNAc...) asparagine glycosylation. Catalysis depends on charge relay system residues Asp162 and His200. Cystine bridges form between Cys216–Cys363 and Cys308–Cys338. Ser371 acts as the Charge relay system in catalysis. The region spanning Val449–Asn588 is the P/Homo B domain. Asn463, Asn471, and Asn620 each carry an N-linked (GlcNAc...) asparagine glycan. A helical transmembrane segment spans residues Ile669–Ala693. The Cytoplasmic portion of the chain corresponds to Phe694–Ala709.

This sequence belongs to the peptidase S8 family. Furin subfamily. Ca(2+) serves as cofactor. In terms of processing, N-glycosylated.

The protein localises to the golgi apparatus. Its subcellular location is the trans-Golgi network membrane. Membrane-bound, subtilisin-like serine protease that processes the P-factor precursor and other precursor proteins. Essential for cell viability. Cleaves substrate on the C-terminal side of dibasic residues. This is Dibasic-processing endoprotease (krp1) from Schizosaccharomyces pombe (strain 972 / ATCC 24843) (Fission yeast).